Consider the following 401-residue polypeptide: Odorant receptor 88a (401 aa).

Topologically, residues 1–26 are cytoplasmic; sequence MKPTEIKKPYRMEEFLRPQMFQEVAQ. Residues 27 to 47 traverse the membrane as a helical segment; the sequence is MVHFQWRRNPVDNSMVNASMV. The Extracellular portion of the chain corresponds to 48–52; it reads PFCLS. The chain crosses the membrane as a helical span at residues 53 to 73; the sequence is AFLNVLFFGCNGWDIIGHFWL. The Cytoplasmic segment spans residues 74-142; sequence GHPANQNPPV…NFWQRYRFIR (69 aa). Residues 143–163 form a helical membrane-spanning segment; the sequence is IYSHLGGPMFCVVPLALFLLT. Over 164–191 the chain is Extracellular; the sequence is HEGKDTPVAQHEQLLGGWLPCGVRKDPN. Residues 192-212 form a helical membrane-spanning segment; the sequence is FYLLVWSFDLMCTTCGVSFFV. The Cytoplasmic portion of the chain corresponds to 213 to 277; sequence TFDNLFNVMQ…LCRKYNDIFK (65 aa). A helical transmembrane segment spans residues 278–298; it reads VAFLVSNFVGAGSLCFYLFML. Residues 299 to 303 are Extracellular-facing; the sequence is SETSD. A helical transmembrane segment spans residues 304 to 324; it reads VLIIAQYILPTLVLVGFTFEI. At 325–370 the chain is on the cytoplasmic side; the sequence is CLRGTQLEKASEGLESSLRSQEWYLGSRRYRKFYLLWTQYCQRTQQ. Residues 371 to 391 form a helical membrane-spanning segment; the sequence is LGAFGLIQVNMVHFTEIMQLA. Topologically, residues 392 to 401 are extracellular; that stretch reads YRLFTFLKSH.

It belongs to the insect chemoreceptor superfamily. Heteromeric odorant receptor channel (TC 1.A.69) family. Or49a subfamily. As to quaternary structure, interacts with Orco. Complexes exist early in the endomembrane system in olfactory sensory neurons (OSNs), coupling these complexes to the conserved ciliary trafficking pathway. In terms of tissue distribution, expressed in olfactory sensory neurons in the antenna.

The protein resides in the cell membrane. Functionally, odorant receptor which mediates acceptance or avoidance behavior, depending on its substrates. The odorant receptor repertoire encodes a large collection of odor stimuli that vary widely in identity, intensity, and duration. May form a complex with Orco to form odorant-sensing units, providing sensitive and prolonged odorant signaling and calcium permeability. This chain is Odorant receptor 88a (Or88a), found in Drosophila melanogaster (Fruit fly).